We begin with the raw amino-acid sequence, 87 residues long: RNA-binding protein Hfq (87 aa).

The 60-residue stretch at 9–68 folds into the Sm domain; that stretch reads DPFLNALRRERIPVSIYLVNGIKLQGQIESFDQFVILLKNTVSQMVYKHAISTVVPARAV.

It belongs to the Hfq family. In terms of assembly, homohexamer.

Its function is as follows. RNA chaperone that binds small regulatory RNA (sRNAs) and mRNAs to facilitate mRNA translational regulation in response to envelope stress, environmental stress and changes in metabolite concentrations. Also binds with high specificity to tRNAs. The sequence is that of RNA-binding protein Hfq from Aeromonas salmonicida (strain A449).